A 115-amino-acid polypeptide reads, in one-letter code: Putative UPF0377 protein YHL045W (115 aa).

Residues 10-30 (ACIFIDSVCEGIVFWGLCLFV) form a helical membrane-spanning segment.

The protein belongs to the UPF0377 family.

It localises to the membrane. In Saccharomyces cerevisiae (strain ATCC 204508 / S288c) (Baker's yeast), this protein is Putative UPF0377 protein YHL045W.